Reading from the N-terminus, the 267-residue chain is Sepiapterin reductase (267 aa).

Residue M1 is modified to N-acetylmethionine. Position 20–26 (20–26 (GASRGFG)) interacts with NADP(+). A Phosphoserine modification is found at S38. NADP(+) contacts are provided by residues 48-49 (RN) and 75-76 (DL). Residues 163-164 (SI) and Y176 contribute to the substrate site. Residue K180 coordinates NADP(+). Phosphoserine is present on S201. Position 205 (G205) interacts with substrate. Residue 207-212 (LDTDMQ) participates in NADP(+) binding. S219 carries the phosphoserine modification. Position 263 (D263) interacts with substrate.

Belongs to the sepiapterin reductase family. Homodimer.

It localises to the cytoplasm. The catalysed reaction is L-erythro-7,8-dihydrobiopterin + NADP(+) = L-sepiapterin + NADPH + H(+). It carries out the reaction (6R)-L-erythro-5,6,7,8-tetrahydrobiopterin + 2 NADP(+) = 6-pyruvoyl-5,6,7,8-tetrahydropterin + 2 NADPH + 2 H(+). Catalyzes the final one or two reductions in tetra-hydrobiopterin biosynthesis to form 5,6,7,8-tetrahydrobiopterin. This is Sepiapterin reductase (SPR) from Bos taurus (Bovine).